We begin with the raw amino-acid sequence, 275 residues long: Phosphite transport system permease protein PtxC (275 aa).

The next 5 membrane-spanning stretches (helical) occupy residues 30–50, 88–108, 136–156, 221–241, and 249–269; these read LGQVAIVFGVVLLACWYVGLL, LAMSIAGTAIAVVFSLVVAFV, LIMGIIFVAAVGFGALPGVLA, ASTVMGMVGAGGIGFELMGSL, and VAAILLVILAMVTLVDAFSGV. The ABC transmembrane type-1 domain occupies 84–267; sequence LIDTLAMSIA…AMVTLVDAFS (184 aa).

Belongs to the binding-protein-dependent transport system permease family.

The protein resides in the cell inner membrane. In terms of biological role, probably forms part of a binding-protein-dependent phosphite transporter. Probably responsible for the translocation of the substrate across the membrane. This Stutzerimonas stutzeri (Pseudomonas stutzeri) protein is Phosphite transport system permease protein PtxC (ptxC).